A 75-amino-acid chain; its full sequence is ATP synthase subunit c (75 aa).

2 helical membrane passes run 8-28 (FIAIGLAVFGMLGAGLGIANI) and 52-72 (IGAAMVEIMGLLAFVLAMLLI).

It belongs to the ATPase C chain family. In terms of assembly, F-type ATPases have 2 components, F(1) - the catalytic core - and F(0) - the membrane proton channel. F(1) has five subunits: alpha(3), beta(3), gamma(1), delta(1), epsilon(1). F(0) has three main subunits: a(1), b(2) and c(10-14). The alpha and beta chains form an alternating ring which encloses part of the gamma chain. F(1) is attached to F(0) by a central stalk formed by the gamma and epsilon chains, while a peripheral stalk is formed by the delta and b chains.

Its subcellular location is the cell membrane. Functionally, f(1)F(0) ATP synthase produces ATP from ADP in the presence of a proton or sodium gradient. F-type ATPases consist of two structural domains, F(1) containing the extramembraneous catalytic core and F(0) containing the membrane proton channel, linked together by a central stalk and a peripheral stalk. During catalysis, ATP synthesis in the catalytic domain of F(1) is coupled via a rotary mechanism of the central stalk subunits to proton translocation. Its function is as follows. Key component of the F(0) channel; it plays a direct role in translocation across the membrane. A homomeric c-ring of between 10-14 subunits forms the central stalk rotor element with the F(1) delta and epsilon subunits. The protein is ATP synthase subunit c of Wolbachia pipientis wMel.